The sequence spans 303 residues: Cobalamin biosynthesis protein CobD (303 aa).

Helical transmembrane passes span 65 to 85, 147 to 167, 235 to 255, and 283 to 303; these read LLAW…IVLL, DAVF…VVLY, AGPV…GAAI, and LVWA…WLYA.

The protein belongs to the CobD/CbiB family.

It is found in the cell membrane. It functions in the pathway cofactor biosynthesis; adenosylcobalamin biosynthesis. Its function is as follows. Converts cobyric acid to cobinamide by the addition of aminopropanol on the F carboxylic group. This Stutzerimonas stutzeri (strain A1501) (Pseudomonas stutzeri) protein is Cobalamin biosynthesis protein CobD.